A 208-amino-acid chain; its full sequence is LexA repressor (208 aa).

The H-T-H motif DNA-binding region spans 28–48 (RAEIARELGFRSANAAEEHLK). Active-site for autocatalytic cleavage activity residues include S125 and K162.

The protein belongs to the peptidase S24 family. Homodimer.

The enzyme catalyses Hydrolysis of Ala-|-Gly bond in repressor LexA.. Its function is as follows. Represses a number of genes involved in the response to DNA damage (SOS response), including recA and lexA. In the presence of single-stranded DNA, RecA interacts with LexA causing an autocatalytic cleavage which disrupts the DNA-binding part of LexA, leading to derepression of the SOS regulon and eventually DNA repair. The sequence is that of LexA repressor from Aliivibrio fischeri (strain MJ11) (Vibrio fischeri).